The chain runs to 203 residues: Small ribosomal subunit protein uS10m (203 aa).

A mitochondrion-targeting transit peptide spans 1–14 (MLRNTIALRSFIRT). Ser193 is modified (phosphoserine).

It belongs to the universal ribosomal protein uS10 family. In terms of assembly, component of the mitochondrial small ribosomal subunit (mt-SSU). Mature yeast 74S mitochondrial ribosomes consist of a small (37S) and a large (54S) subunit. The 37S small subunit contains a 15S ribosomal RNA (15S mt-rRNA) and 34 different proteins. The 54S large subunit contains a 21S rRNA (21S mt-rRNA) and 46 different proteins.

The protein localises to the mitochondrion. Functionally, component of the mitochondrial ribosome (mitoribosome), a dedicated translation machinery responsible for the synthesis of mitochondrial genome-encoded proteins, including at least some of the essential transmembrane subunits of the mitochondrial respiratory chain. The mitoribosomes are attached to the mitochondrial inner membrane and translation products are cotranslationally integrated into the membrane. This is Small ribosomal subunit protein uS10m (RSM10) from Saccharomyces cerevisiae (strain ATCC 204508 / S288c) (Baker's yeast).